The primary structure comprises 266 residues: DNA primase (266 aa).

Residues 244-266 (VTTTTTPSPPKIGSMQTTTKSTT) form a disordered region. Residues 257-266 (SMQTTTKSTT) show a composition bias toward polar residues.

It belongs to the baculoviridae LEF-1 family. Interacts with LEF-2.

In terms of biological role, plays an essential role in viral DNA replication. May generates single-stranded DNA for both leading and lagging strand synthesis. The primase initiates primer synthesis and thereby produces large amount of short RNA primers on the lagging strand that the polymerase elongates using dNTPs. The polypeptide is DNA primase (LEF-1) (Autographa californica nuclear polyhedrosis virus (AcMNPV)).